A 252-amino-acid polypeptide reads, in one-letter code: Glucosamine-6-phosphate deaminase (252 aa).

D67 functions as the Proton acceptor; for enolization step in the catalytic mechanism. The active-site For ring-opening step is N137. Residue H139 is the Proton acceptor; for ring-opening step of the active site. The For ring-opening step role is filled by E144.

It belongs to the glucosamine/galactosamine-6-phosphate isomerase family. NagB subfamily.

It catalyses the reaction alpha-D-glucosamine 6-phosphate + H2O = beta-D-fructose 6-phosphate + NH4(+). It participates in amino-sugar metabolism; N-acetylneuraminate degradation; D-fructose 6-phosphate from N-acetylneuraminate: step 5/5. Its function is as follows. Catalyzes the reversible isomerization-deamination of glucosamine 6-phosphate (GlcN6P) to form fructose 6-phosphate (Fru6P) and ammonium ion. This chain is Glucosamine-6-phosphate deaminase, found in Staphylococcus aureus (strain MRSA252).